Consider the following 884-residue polypeptide: Microsomal triglyceride transfer protein large subunit (884 aa).

Residues 1 to 21 (MMPVAGLLLCVTAVLCTSALG) form the signal peptide. Residues 26–660 (LDNGKLYRYS…QSNNALLHGL (635 aa)) enclose the Vitellogenin domain. A disulfide bond links Cys-172 and Cys-192. Residue Asn-348 is glycosylated (N-linked (GlcNAc...) asparagine). A disulfide bond links Cys-438 and Cys-443. N-linked (GlcNAc...) asparagine glycosylation occurs at Asn-787.

Heterodimer; heterodimerizes with the protein disulfide isomerase. Highest expression in the proximal part of the anterior intestine. Lower expression in the distal part of the anterior intestine, in the posterior portion of the intestinal tube and liver. Very low expression levels in heart, brain, ovary, testis and kidney.

The protein resides in the endoplasmic reticulum. It is found in the golgi apparatus. The catalysed reaction is a 1,2-diacyl-sn-glycero-3-phosphocholine(in) = a 1,2-diacyl-sn-glycero-3-phosphocholine(out). The enzyme catalyses a 1,2-diacyl-sn-glycero-3-phosphoethanolamine(in) = a 1,2-diacyl-sn-glycero-3-phosphoethanolamine(out). It catalyses the reaction a cholesterol ester(in) = a cholesterol ester(out). It carries out the reaction a triacyl-sn-glycerol(in) = a triacyl-sn-glycerol(out). Inhibited by naringenin. Its function is as follows. Catalyzes the transport of triglyceride between phospholipid surfaces. Catalyzes the transport of cholesteryl ester, and phospholipid between phospholipid surfaces. Required for the assembly and secretion of plasma lipoproteins that contain apolipoprotein B. Required for yolk lipid utilization and absorption of dietary lipids in larvae. The protein is Microsomal triglyceride transfer protein large subunit of Danio rerio (Zebrafish).